We begin with the raw amino-acid sequence, 152 residues long: Ribonuclease pancreatic (152 aa).

The signal sequence occupies residues 1 to 24 (MALDKSVILLPLLVLVLLVLGCLG). Substrate is bound by residues lysine 31 and arginine 34. Histidine 36 serves as the catalytic Proton acceptor. An N-linked (GlcNAc...) asparagine glycan is attached at asparagine 46. 4 disulfides stabilise this stretch: cysteine 50/cysteine 108, cysteine 64/cysteine 119, cysteine 82/cysteine 134, and cysteine 89/cysteine 96. Residues 65–69 (KPVNT), lysine 90, and arginine 109 contribute to the substrate site. N-linked (GlcNAc...) asparagine glycosylation is present at asparagine 112. Histidine 143 acts as the Proton donor in catalysis.

The protein belongs to the pancreatic ribonuclease family. Monomer. Interacts with and forms tight 1:1 complexes with RNH1. Dimerization of two such complexes may occur. Interaction with RNH1 inhibits this protein.

The protein resides in the secreted. The catalysed reaction is an [RNA] containing cytidine + H2O = an [RNA]-3'-cytidine-3'-phosphate + a 5'-hydroxy-ribonucleotide-3'-[RNA].. The enzyme catalyses an [RNA] containing uridine + H2O = an [RNA]-3'-uridine-3'-phosphate + a 5'-hydroxy-ribonucleotide-3'-[RNA].. In terms of biological role, endonuclease that catalyzes the cleavage of RNA on the 3' side of pyrimidine nucleotides. Acts on single-stranded and double-stranded RNA. The chain is Ribonuclease pancreatic (RNASE1) from Miopithecus talapoin (Angolan talapoin).